Here is a 218-residue protein sequence, read N- to C-terminus: NAD(P)H-quinone oxidoreductase subunit I (218 aa).

2 4Fe-4S ferredoxin-type domains span residues 55–84 (GRIH…VDWV) and 95–124 (RNYS…MTEE). The [4Fe-4S] cluster site is built by cysteine 64, cysteine 67, cysteine 70, cysteine 74, cysteine 104, cysteine 107, cysteine 110, and cysteine 114. A disordered region spans residues 179 to 218 (LRAGKLPSQIIKELQADKSEEEGKNNSSDMVPNKLNSTNK). The segment covering 192 to 202 (LQADKSEEEGK) has biased composition (basic and acidic residues). The segment covering 203–218 (NNSSDMVPNKLNSTNK) has biased composition (polar residues).

The protein belongs to the complex I 23 kDa subunit family. NDH-1 is composed of at least 11 different subunits. Requires [4Fe-4S] cluster as cofactor.

It is found in the cellular thylakoid membrane. It carries out the reaction a plastoquinone + NADH + (n+1) H(+)(in) = a plastoquinol + NAD(+) + n H(+)(out). The catalysed reaction is a plastoquinone + NADPH + (n+1) H(+)(in) = a plastoquinol + NADP(+) + n H(+)(out). Its function is as follows. NDH-1 shuttles electrons from an unknown electron donor, via FMN and iron-sulfur (Fe-S) centers, to quinones in the respiratory and/or the photosynthetic chain. The immediate electron acceptor for the enzyme in this species is believed to be plastoquinone. Couples the redox reaction to proton translocation, and thus conserves the redox energy in a proton gradient. This Prochlorococcus marinus (strain NATL2A) protein is NAD(P)H-quinone oxidoreductase subunit I.